The following is a 318-amino-acid chain: Cyclic AMP receptor-like protein F (318 aa).

Over 1–3 (MKD) the chain is Extracellular. Residues 4 to 24 (IILIYMICAPISMIGSLFIII) form a helical membrane-spanning segment. The Cytoplasmic portion of the chain corresponds to 25–38 (TWLLYAKLKNSGSN). A helical transmembrane segment spans residues 39–59 (FIFFQAISDFFFTSKYIITII). Topologically, residues 60–83 (FYYINIPQFSDETSSTDTNPYCFS) are extracellular. The cysteines at positions 81 and 177 are disulfide-linked. A helical membrane pass occupies residues 84-104 (LGLFSQFFGQATIMWSYTMTV). At 105–145 (KVFHSYFEMKKKNNNNNIGSNNIGGGGGGNNSNKQNSIDKT) the chain is on the cytoplasmic side. Residues 146-166 (LKWYHLFVWGFCLVNATIIGI) form a helical membrane-spanning segment. Residues 167 to 187 (SKQYGPSSTGCWIVGANNPYR) lie on the Extracellular side of the membrane. A helical membrane pass occupies residues 188 to 208 (FFELVPLYFTITTSIIILILI). Over 209–234 (LVKMKKSKPSSLLPTESMRYNQQARE) the chain is Cytoplasmic. The chain crosses the membrane as a helical span at residues 235 to 255 (FKIQLMKFVLIFIIFWLPATV). The Extracellular portion of the chain corresponds to 256–267 (LRTLEYFGIEKT). The helical transmembrane segment at 268–288 (FFILLDAVSVSLQALANSLVW) threads the bilayer. Over 289 to 318 (ATSPQFLKLMKRKVVNKPNKQMEREYLINK) the chain is Cytoplasmic.

This sequence belongs to the G-protein coupled receptor 5 family.

Its subcellular location is the membrane. Receptor for cAMP. The polypeptide is Cyclic AMP receptor-like protein F (crlF) (Dictyostelium discoideum (Social amoeba)).